Consider the following 244-residue polypeptide: Small ribosomal subunit protein uS2m (244 aa).

This sequence belongs to the universal ribosomal protein uS2 family.

It localises to the mitochondrion. This is Small ribosomal subunit protein uS2m (mrps2) from Dictyostelium discoideum (Social amoeba).